The sequence spans 352 residues: UDP-N-acetylglucosamine--N-acetylmuramyl-(pentapeptide) pyrophosphoryl-undecaprenol N-acetylglucosamine transferase (352 aa).

UDP-N-acetyl-alpha-D-glucosamine is bound by residues Thr14–Gly16, Asn124, Arg164, Ser185, and Gln285.

Belongs to the glycosyltransferase 28 family. MurG subfamily.

Its subcellular location is the cell inner membrane. It catalyses the reaction di-trans,octa-cis-undecaprenyl diphospho-N-acetyl-alpha-D-muramoyl-L-alanyl-D-glutamyl-meso-2,6-diaminopimeloyl-D-alanyl-D-alanine + UDP-N-acetyl-alpha-D-glucosamine = di-trans,octa-cis-undecaprenyl diphospho-[N-acetyl-alpha-D-glucosaminyl-(1-&gt;4)]-N-acetyl-alpha-D-muramoyl-L-alanyl-D-glutamyl-meso-2,6-diaminopimeloyl-D-alanyl-D-alanine + UDP + H(+). Its pathway is cell wall biogenesis; peptidoglycan biosynthesis. In terms of biological role, cell wall formation. Catalyzes the transfer of a GlcNAc subunit on undecaprenyl-pyrophosphoryl-MurNAc-pentapeptide (lipid intermediate I) to form undecaprenyl-pyrophosphoryl-MurNAc-(pentapeptide)GlcNAc (lipid intermediate II). The polypeptide is UDP-N-acetylglucosamine--N-acetylmuramyl-(pentapeptide) pyrophosphoryl-undecaprenol N-acetylglucosamine transferase (Chlamydia trachomatis serovar L2 (strain ATCC VR-902B / DSM 19102 / 434/Bu)).